Consider the following 396-residue polypeptide: Acetate kinase (396 aa).

Residue asparagine 7 coordinates Mg(2+). Residue lysine 14 coordinates ATP. Arginine 88 is a substrate binding site. Aspartate 145 serves as the catalytic Proton donor/acceptor. ATP is bound by residues 205-209, 279-281, and 327-331; these read HLGNG, DFR, and GIGEN. Glutamate 381 lines the Mg(2+) pocket.

It belongs to the acetokinase family. In terms of assembly, homodimer. It depends on Mg(2+) as a cofactor. Mn(2+) is required as a cofactor.

The protein resides in the cytoplasm. The catalysed reaction is acetate + ATP = acetyl phosphate + ADP. It functions in the pathway metabolic intermediate biosynthesis; acetyl-CoA biosynthesis; acetyl-CoA from acetate: step 1/2. Its function is as follows. Catalyzes the formation of acetyl phosphate from acetate and ATP. Can also catalyze the reverse reaction. This chain is Acetate kinase, found in Campylobacter jejuni subsp. jejuni serotype O:2 (strain ATCC 700819 / NCTC 11168).